We begin with the raw amino-acid sequence, 226 residues long: Ribonuclease HII (226 aa).

The RNase H type-2 domain maps to 29–220 (GPVAGVDEAG…VVAAGVRLEQ (192 aa)). 3 residues coordinate a divalent metal cation: Asp-35, Glu-36, and Asp-129.

Belongs to the RNase HII family. The cofactor is Mn(2+). It depends on Mg(2+) as a cofactor.

It localises to the cytoplasm. The catalysed reaction is Endonucleolytic cleavage to 5'-phosphomonoester.. Its function is as follows. Endonuclease that specifically degrades the RNA of RNA-DNA hybrids. This is Ribonuclease HII from Rhodococcus erythropolis (strain PR4 / NBRC 100887).